We begin with the raw amino-acid sequence, 325 residues long: E3 ubiquitin-protein ligase SIAH2 (325 aa).

Residues 1-15 (MSRPSSTGPSANKPC) are compositionally biased toward polar residues. The disordered stretch occupies residues 1–43 (MSRPSSTGPSANKPCSKQPPPPQTPHAPSPAAPPAAATISAAG). Ser6 is subject to Phosphoserine. Ser16 is modified (phosphoserine; by DYRK2). Positions 17–33 (KQPPPPQTPHAPSPAAP) are enriched in pro residues. At Thr24 the chain carries Phosphothreonine; by MAPK14. Position 29 is a phosphoserine; by DYRK2 and MAPK14 (Ser29). The segment covering 34–43 (PAAATISAAG) has biased composition (low complexity). Residue Ser69 is modified to Phosphoserine; by DYRK2. An RING-type zinc finger spans residues 81 to 116 (CPVCFDYVLPPILQCQAGHLVCNQCRQKLSCCPTCR). Thr120 bears the Phosphothreonine; by DYRK2 mark. Positions 131–323 (VASAVLFPCK…LGINVTISTC (193 aa)) are SBD. The SIAH-type zinc finger occupies 134–194 (AVLFPCKYAT…VMSHLMHAHK (61 aa)). Zn(2+) contacts are provided by Cys139, Cys146, His158, Cys162, Cys169, Cys176, His188, and His193.

Belongs to the SINA (Seven in absentia) family. Homodimer. Interacts with VAV1, without mediating its ubiquitin-mediated degradation. Probable component of some large E3 complex possibly composed of UBE2D1, SIAH2, CACYBP/SIP, SKP1, APC and TBL1X. Interacts with UBE2I. Interacts with UBE2E2. Interacts with PEG10, which may inhibit its activity. Interacts with PEG3 and EGLN2. Interacts with DYRK2. Interacts with SNCAIP. Interacts with NR1D1 and NR1D2. Interacts with DCC. Interacts with AXIN1. Post-translationally, phosphorylated at Thr-24 and Ser-29 by MAPK14, which mediates the degradation by the proteasome of EGLN3. Phosphorylated at Ser-29 by DYRK2; this increases the ubiquitin ligase activity and promotes degradation of EGLN3. As to expression, detected in brain (at protein level).

It is found in the cytoplasm. The protein resides in the nucleus. It carries out the reaction S-ubiquitinyl-[E2 ubiquitin-conjugating enzyme]-L-cysteine + [acceptor protein]-L-lysine = [E2 ubiquitin-conjugating enzyme]-L-cysteine + N(6)-ubiquitinyl-[acceptor protein]-L-lysine.. It participates in protein modification; protein ubiquitination. In terms of biological role, E3 ubiquitin-protein ligase that mediates ubiquitination and subsequent proteasomal degradation of target proteins. E3 ubiquitin ligases accept ubiquitin from an E2 ubiquitin-conjugating enzyme in the form of a thioester and then directly transfers the ubiquitin to targeted substrates. Mediates E3 ubiquitin ligase activity either through direct binding to substrates or by functioning as the essential RING domain subunit of larger E3 complexes. Mediates ubiquitination and proteasomal degradation of DYRK2 in response to hypoxia. Promotes monoubiquitination of SNCA. Triggers the ubiquitin-mediated degradation of many substrates, including proteins involved in transcription regulation (GPS2, POU2AF1, PML, NCOR1), a cell surface receptor (DCC), an antiapoptotic protein (BAG1), and a protein involved in synaptic vesicle function in neurons (SYP). It is thereby involved in apoptosis, tumor suppression, cell cycle, transcription and signaling processes. Has some overlapping function with SIAH1. Triggers the ubiquitin-mediated degradation of TRAF2, whereas SIAH1 does not. Regulates cellular clock function via ubiquitination of circadian transcriptional repressors NR1D1 and NR1D2 leading to their proteasomal degradation. Plays an important role in mediating the rhythmic degradation/clearance of NR1D1 and NR1D2 contributing to their circadian profile of protein abundance. Mediates ubiquitination and degradation of EGLN2 and EGLN3 in response to the unfolded protein response (UPR), leading to their degradation and subsequent stabilization of ATF4. Also part of the Wnt signaling pathway in which it mediates the Wnt-induced ubiquitin-mediated proteasomal degradation of AXIN1. This is E3 ubiquitin-protein ligase SIAH2 (Siah2) from Rattus norvegicus (Rat).